Consider the following 228-residue polypeptide: Ribulose-phosphate 3-epimerase (228 aa).

Residue serine 9 coordinates substrate. A divalent metal cation-binding residues include histidine 34, aspartate 36, histidine 68, and aspartate 177. The active-site Proton acceptor is aspartate 36. Substrate-binding positions include histidine 68, 177–179 (DGG), and 199–200 (GS). The Proton donor role is filled by aspartate 177.

This sequence belongs to the ribulose-phosphate 3-epimerase family. A divalent metal cation serves as cofactor.

It catalyses the reaction D-ribulose 5-phosphate = D-xylulose 5-phosphate. Its pathway is carbohydrate degradation. Its function is as follows. Catalyzes the reversible epimerization of D-ribulose 5-phosphate to D-xylulose 5-phosphate. The protein is Ribulose-phosphate 3-epimerase of Buchnera aphidicola subsp. Schizaphis graminum (strain Sg).